The primary structure comprises 574 residues: Membralin (574 aa).

The tract at residues 1-27 (MSEHAAAPGPGPNGGGGGGAAPVRGPR) is disordered. The residue at position 2 (Ser2) is an N-acetylserine. The helical transmembrane segment at 69 to 89 (FFVLLKALFVLFVLAYIHIVF) threads the bilayer. Asn180 is a glycosylation site (N-linked (GlcNAc...) asparagine). The next 3 helical transmembrane spans lie at 293 to 313 (TSYL…SMLL), 337 to 357 (IAFP…MEAI), and 417 to 437 (YSSL…IYFF). Low complexity-rich tracts occupy residues 461–470 (LGPGTPTALP) and 491–501 (LGPSSSPAPTG). Disordered regions lie at residues 461 to 515 (LGPG…GASV) and 546 to 574 (RRPT…PAGS).

It belongs to the membralin family. Interacts with ERLIN2. Detected in brain, spinal cord, lung, liver and kidney.

Its subcellular location is the endoplasmic reticulum membrane. Its function is as follows. May have a role in the ERAD pathway required for clearance of misfolded proteins in the endoplasmic reticulum (ER). Promotes survival of motor neurons, probably by protecting against ER stress. This Mus musculus (Mouse) protein is Membralin (Tmem259).